Reading from the N-terminus, the 199-residue chain is Molybdenum cofactor guanylyltransferase (199 aa).

GTP-binding positions include L12–G14, K25, N53, D71, and D101. Residue D101 participates in Mg(2+) binding.

The protein belongs to the MobA family. As to quaternary structure, monomer. The cofactor is Mg(2+).

It is found in the cytoplasm. The catalysed reaction is Mo-molybdopterin + GTP + H(+) = Mo-molybdopterin guanine dinucleotide + diphosphate. Transfers a GMP moiety from GTP to Mo-molybdopterin (Mo-MPT) cofactor (Moco or molybdenum cofactor) to form Mo-molybdopterin guanine dinucleotide (Mo-MGD) cofactor. The sequence is that of Molybdenum cofactor guanylyltransferase from Cupriavidus taiwanensis (strain DSM 17343 / BCRC 17206 / CCUG 44338 / CIP 107171 / LMG 19424 / R1) (Ralstonia taiwanensis (strain LMG 19424)).